The chain runs to 285 residues: Phosphate import ATP-binding protein PstB (285 aa).

Residues 22–262 (MRAVDLTLGF…PQHEETVRYF (241 aa)) form the ABC transporter domain. ATP is bound at residue 54–61 (GPTGSGKT). A disordered region spans residues 266–285 (RPAQGSDRGSSQTAGVAESQ). The span at 272–285 (DRGSSQTAGVAESQ) shows a compositional bias: polar residues.

The protein belongs to the ABC transporter superfamily. Phosphate importer (TC 3.A.1.7) family. As to quaternary structure, the complex is composed of two ATP-binding proteins (PstB), two transmembrane proteins (PstC and PstA) and a solute-binding protein (PstS).

The protein resides in the cell membrane. The catalysed reaction is phosphate(out) + ATP + H2O = ADP + 2 phosphate(in) + H(+). Part of the ABC transporter complex PstSACB involved in phosphate import. Responsible for energy coupling to the transport system. The chain is Phosphate import ATP-binding protein PstB from Mycobacterium intracellulare.